Here is a 423-residue protein sequence, read N- to C-terminus: Amino sugar nitrososynthase RubN8 (423 aa).

The protein belongs to the acyl-CoA dehydrogenase family. It depends on FAD as a cofactor.

It participates in antibiotic biosynthesis. Functionally, nitrososynthase involved in the biosynthesis of rubradirin, an ansamycin antibiotic. In vitro, catalyzes the double-oxidation of TDP-L-epi-vancosamine to TDP-L-epi-vancosonitrose. In vivo, probably catalyzes the formation of D-rubranitrose, the nitro sugar moiety of rubradirin. The sequence is that of Amino sugar nitrososynthase RubN8 from Streptomyces rubradiris (Streptomyces achromogenes subsp. rubradiris).